The sequence spans 513 residues: ATP synthase subunit alpha (513 aa).

169–176 (GDRQTGKT) is a binding site for ATP.

It belongs to the ATPase alpha/beta chains family. In terms of assembly, F-type ATPases have 2 components, CF(1) - the catalytic core - and CF(0) - the membrane proton channel. CF(1) has five subunits: alpha(3), beta(3), gamma(1), delta(1), epsilon(1). CF(0) has three main subunits: a(1), b(2) and c(9-12). The alpha and beta chains form an alternating ring which encloses part of the gamma chain. CF(1) is attached to CF(0) by a central stalk formed by the gamma and epsilon chains, while a peripheral stalk is formed by the delta and b chains.

The protein localises to the cell inner membrane. It catalyses the reaction ATP + H2O + 4 H(+)(in) = ADP + phosphate + 5 H(+)(out). Functionally, produces ATP from ADP in the presence of a proton gradient across the membrane. The alpha chain is a regulatory subunit. This Actinobacillus pleuropneumoniae serotype 3 (strain JL03) protein is ATP synthase subunit alpha.